We begin with the raw amino-acid sequence, 316 residues long: Uracil-DNA glycosylase (316 aa).

A compositionally biased stretch (low complexity) spans Ala36–Ser79. The interval Ala36 to Asp91 is disordered. The Proton acceptor role is filled by Asp159.

This sequence belongs to the uracil-DNA glycosylase (UDG) superfamily. UNG family.

Its subcellular location is the host nucleus. The catalysed reaction is Hydrolyzes single-stranded DNA or mismatched double-stranded DNA and polynucleotides, releasing free uracil.. Functionally, excises uracil residues from the DNA which can arise as a result of misincorporation of dUMP residues by DNA polymerase or deamination of cytosines. Therefore may reduce deleterious uracil incorporation into the viral genome, particularly in terminally differentiated cells which lack DNA repair enzymes. The sequence is that of Uracil-DNA glycosylase (UL2) from Sus scrofa (Pig).